Reading from the N-terminus, the 199-residue chain is Thymidylate kinase (199 aa).

7-14 (GTEGVGKT) is an ATP binding site.

It belongs to the thymidylate kinase family.

The catalysed reaction is dTMP + ATP = dTDP + ADP. In terms of biological role, phosphorylation of dTMP to form dTDP in both de novo and salvage pathways of dTTP synthesis. The polypeptide is Thymidylate kinase (Acinetobacter baumannii (strain ACICU)).